The primary structure comprises 985 residues: Exocyst complex component 4 (985 aa).

Residues S36–Q70 are a coiled coil. 5 positions are modified to phosphoserine: S235, S456, S459, S682, and S686. The disordered stretch occupies residues D434–F480.

The protein belongs to the SEC8 family. In terms of assembly, the exocyst complex is composed of Sec3/Exoc1, Sec5/Exoc2, Sec6/Exoc3, Sec8/Exoc4, Sec10/Exoc5, Sec15/Exoc6, exo70/Exoc7 and Exo84/Exoc8. Abundant in the embryonic and larval glutamatergic neuromuscular junctions (NMJs), pre and postsynaptically.

Component of the exocyst complex involved in the docking of exocytic vesicles with fusion sites on the plasma membrane. Involved in regulation of synaptic microtubule formation, and also regulation of synaptic growth and glutamate receptor trafficking. Does not appear to be required for basal neurotransmission. The polypeptide is Exocyst complex component 4 (Drosophila melanogaster (Fruit fly)).